Consider the following 593-residue polypeptide: Pentatricopeptide repeat-containing protein At5g24830 (593 aa).

PPR repeat units follow at residues 120–154 (CLSI…GVIP), 155–189 (GLIT…GPSP), 190–224 (NCVS…GIRP), 225–256 (NRVT…ILDS), 264–298 (DIVI…NVPA), 299–333 (DSVV…GVNP), 334–368 (DVFT…GVAP), 369–403 (DQIS…SLLP), 404–438 (EVLL…GVKP), 439–473 (NVYT…KIHP), 474–508 (DTTT…GCQP), and 509–543 (DIIT…GITI).

It belongs to the PPR family. P subfamily.

The chain is Pentatricopeptide repeat-containing protein At5g24830 from Arabidopsis thaliana (Mouse-ear cress).